The primary structure comprises 259 residues: MMQKQNMIVVNQKEIAKNIYELVLQGTLVQQMNEPGQFVHIKVAEGIAPLLRRPISICNVDQEKNEFTMLYRAEGQGTKTLATRKQGEMVDVLGPLGHGFPLEEAEAGQTALLVGGGIGVPPLYELSQRLVAKGVRVIHILGFQTKDVVFYEEKFAELGDTYVATVDGTHGTKGFVTDVIDNYGIDFDILYSCGPLAMLRALEGRYKEKKAYISLEERMGCGIGACFACVCHLQEDPSGHSYKKVCSDGPVFPIGEVVL.

Residues 2–102 (MQKQNMIVVN…LGPLGHGFPL (101 aa)) enclose the FAD-binding FR-type domain. FAD is bound by residues 53–56 (RPIS), 70–72 (LYR), and 77–78 (GT). [2Fe-2S] cluster-binding residues include Cys-221, Cys-226, Cys-229, and Cys-246.

This sequence belongs to the PyrK family. As to quaternary structure, heterotetramer of 2 PyrK and 2 PyrD type B subunits. [2Fe-2S] cluster is required as a cofactor. The cofactor is FAD.

Its pathway is pyrimidine metabolism; UMP biosynthesis via de novo pathway; orotate from (S)-dihydroorotate (NAD(+) route): step 1/1. Functionally, responsible for channeling the electrons from the oxidation of dihydroorotate from the FMN redox center in the PyrD type B subunit to the ultimate electron acceptor NAD(+). The polypeptide is Dihydroorotate dehydrogenase B (NAD(+)), electron transfer subunit (Bacillus cereus (strain B4264)).